The chain runs to 156 residues: Gamma-L-glutamyl-butirosin B gamma-glutamyl cyclotransferase (156 aa).

24-27 (YGTL) lines the substrate pocket. Catalysis depends on E89, which acts as the Proton acceptor.

This sequence belongs to the gamma-glutamylcyclotransferase family.

It catalyses the reaction gamma-L-glutamyl-butirosin B = butirosin B + 5-oxo-L-proline. It functions in the pathway antibiotic biosynthesis; butirosin biosynthesis. In terms of biological role, cyclotransferase that catalyzes the last step in the biosynthesis of the aminoglycoside antibiotic butirosin B. Cleaves the amide bond via transamidation using the alpha-amine of the terminal gamma-L-glutamate of the side chain, releasing it as the cyclic 5-oxoproline. The protein is Gamma-L-glutamyl-butirosin B gamma-glutamyl cyclotransferase (btrG) of Niallia circulans (Bacillus circulans).